The sequence spans 497 residues: MANYILSLDQGTTSSRAILFTREGDIKQIAQKEFTQIYPQPGWVEHNANEIFDTQSYVMRECLQFAGVDASDVAAIGITNQRETTVVWDKKTGAPIHNAIVWQDRRTAGFCDELKAKGLADVIRQKTGLVIDAYFSGTKVRWILDNVPGAREKADKGELLFGTIDSWLIWNLTKGAVHVTDESNASRTLLFNINTGAWDDELLAIIGVPAAMLPRVSKSSEVVGEIHPEFLGKALPIAGNAGDQQAATYGNACLKEGMAKNTYGTGCFMLMNTGKAPRPSNNNLLTTMAWATPSGRYFALEGSVFIAGAVVQWLRDGLGIIQSAPEVEQLALSVPDNGGVFLVPAFAGLGAPHWDQYARGAMVGITRGATKAHIARAALESIALQTLDIMDCMQKDAGIKLDTLRADGGATRNNLLMQFQADVLGVPVERPMVTETTALGAAYLAGLAVGFWKSEEEIAAMWQLDRRFEPNMAQSDRDKLLHDWQRAVARSKAWIEA.

T12 serves as a coordination point for ADP. The ATP site is built by T12, T13, and S14. T12 provides a ligand contact to sn-glycerol 3-phosphate. R16 is a binding site for ADP. Sn-glycerol 3-phosphate is bound by residues R82, E83, Y134, and D243. Glycerol-binding residues include R82, E83, Y134, D243, and Q244. Positions 265 and 308 each coordinate ADP. The ATP site is built by T265, G308, Q312, and G409. ADP contacts are provided by G409 and N413.

The protein belongs to the FGGY kinase family.

It catalyses the reaction glycerol + ATP = sn-glycerol 3-phosphate + ADP + H(+). Its pathway is polyol metabolism; glycerol degradation via glycerol kinase pathway; sn-glycerol 3-phosphate from glycerol: step 1/1. Its activity is regulated as follows. Inhibited by fructose 1,6-bisphosphate (FBP). Functionally, key enzyme in the regulation of glycerol uptake and metabolism. Catalyzes the phosphorylation of glycerol to yield sn-glycerol 3-phosphate. The polypeptide is Glycerol kinase (Solidesulfovibrio magneticus (strain ATCC 700980 / DSM 13731 / RS-1) (Desulfovibrio magneticus)).